Here is a 190-residue protein sequence, read N- to C-terminus: MPRANEIKKGMVLNYNGKLLIVKDIDIQSPTARGAATLYKMRFSDVRTGLKVEERFKGDDIVDTVTLSRRGVDFSYVDGNEYVFMDKEDYTPYTFTKDQIEEELLFMPEGGMPDMQVLTWDGQLLALELPQTVDLEIVETAPGIKGASASARNKPATLSTGLVIQVPEYLSAGEKIRIHIEERRYMGRAD.

The protein belongs to the elongation factor P family.

The sequence is that of Elongation factor P-like protein from Salmonella gallinarum (strain 287/91 / NCTC 13346).